Reading from the N-terminus, the 69-residue chain is Putative membrane protein insertion efficiency factor (69 aa).

The protein belongs to the UPF0161 family.

It localises to the cell inner membrane. Could be involved in insertion of integral membrane proteins into the membrane. In Nitrosomonas europaea (strain ATCC 19718 / CIP 103999 / KCTC 2705 / NBRC 14298), this protein is Putative membrane protein insertion efficiency factor.